The primary structure comprises 166 residues: Probable chemoreceptor glutamine deamidase CheD 1 (166 aa).

Belongs to the CheD family.

It catalyses the reaction L-glutaminyl-[protein] + H2O = L-glutamyl-[protein] + NH4(+). Its function is as follows. Probably deamidates glutamine residues to glutamate on methyl-accepting chemotaxis receptors (MCPs), playing an important role in chemotaxis. This Leptospira interrogans serogroup Icterohaemorrhagiae serovar copenhageni (strain Fiocruz L1-130) protein is Probable chemoreceptor glutamine deamidase CheD 1.